The chain runs to 240 residues: Uridylate kinase (240 aa).

An ATP-binding site is contributed by 13 to 16 (KLSG). The segment at 21–26 (GEQGYG) is involved in allosteric activation by GTP. Position 55 (Gly55) interacts with UMP. Gly56 and Arg60 together coordinate ATP. UMP is bound by residues Asp75 and 137 to 144 (TGNPFFST). 3 residues coordinate ATP: Thr164, Tyr170, and Asp173.

The protein belongs to the UMP kinase family. In terms of assembly, homohexamer.

The protein resides in the cytoplasm. The enzyme catalyses UMP + ATP = UDP + ADP. Its pathway is pyrimidine metabolism; CTP biosynthesis via de novo pathway; UDP from UMP (UMPK route): step 1/1. Its activity is regulated as follows. Allosterically activated by GTP. Inhibited by UTP. Its function is as follows. Catalyzes the reversible phosphorylation of UMP to UDP. This Aquifex aeolicus (strain VF5) protein is Uridylate kinase.